Consider the following 459-residue polypeptide: Putrescine aminotransferase (459 aa).

Residues 150-151 (GT) and Gln274 each bind pyridoxal 5'-phosphate. Lys300 bears the N6-(pyridoxal phosphate)lysine mark. A pyridoxal 5'-phosphate-binding site is contributed by Thr332.

It belongs to the class-III pyridoxal-phosphate-dependent aminotransferase family. Putrescine aminotransferase subfamily. Requires pyridoxal 5'-phosphate as cofactor.

The catalysed reaction is an alkane-alpha,omega-diamine + 2-oxoglutarate = an omega-aminoaldehyde + L-glutamate. It catalyses the reaction putrescine + 2-oxoglutarate = 1-pyrroline + L-glutamate + H2O. The enzyme catalyses cadaverine + 2-oxoglutarate = 5-aminopentanal + L-glutamate. Its pathway is amine and polyamine degradation; putrescine degradation; 4-aminobutanal from putrescine (transaminase route): step 1/1. In terms of biological role, catalyzes the aminotransferase reaction from putrescine to 2-oxoglutarate, leading to glutamate and 4-aminobutanal, which spontaneously cyclizes to form 1-pyrroline. This is the first step in one of two pathways for putrescine degradation, where putrescine is converted into 4-aminobutanoate (gamma-aminobutyrate or GABA) via 4-aminobutanal. Also functions as a cadaverine transaminase in a a L-lysine degradation pathway to succinate that proceeds via cadaverine, glutarate and L-2-hydroxyglutarate. The protein is Putrescine aminotransferase of Salmonella dublin (strain CT_02021853).